The sequence spans 431 residues: MTKSSELYQKAQQTIPGGVNSPVRAFNGVGGSPLFIERADGALIFDADGKAYIDYVGSWGPMILGHNHAVIREAVIDAAQRGLSFGAPTEMEIAMAELVSELVPSMEQIRMVSSGTEATMSAIRLARGFTGRDKIMKFEGCYHGHADSLLVKAGSGALTLGQPSSPGVPADFAKHTLTATFNDLGSVRELFAANKGEIACIIVEPVAGNMNCIPPVEGFHEGLREICDQEGALLIFDEVMTGFRVALGGAQAHYNIKPDLTTLGKVIGGGMPVGAFGGRKEVMQYVAPTGPVYQAGTLSGNPVAMAAGFACLNLLKEEGNEKRLAAKTKQLAEGFKVLAEKHGIPMVVNQVGGMFGFFFTDQETVTCYEDVTKCDVERFKRFFHLMLKHGVYLAPSAFEASFTSLAHGSKEIDATLEAADRCFAILAEEAK.

Lys-265 carries the N6-(pyridoxal phosphate)lysine modification.

Belongs to the class-III pyridoxal-phosphate-dependent aminotransferase family. HemL subfamily. In terms of assembly, homodimer. The cofactor is pyridoxal 5'-phosphate.

It is found in the cytoplasm. The enzyme catalyses (S)-4-amino-5-oxopentanoate = 5-aminolevulinate. The protein operates within porphyrin-containing compound metabolism; protoporphyrin-IX biosynthesis; 5-aminolevulinate from L-glutamyl-tRNA(Glu): step 2/2. This chain is Glutamate-1-semialdehyde 2,1-aminomutase, found in Vibrio campbellii (strain ATCC BAA-1116).